The following is a 225-amino-acid chain: uncharacterized protein (225 aa).

This is an uncharacterized protein from Mycoplasma pneumoniae (strain ATCC 29342 / M129 / Subtype 1) (Mycoplasmoides pneumoniae).